Reading from the N-terminus, the 138-residue chain is PTS system sorbose-specific EIIA component (138 aa).

Positions 1–125 constitute a PTS EIIA type-4 domain; it reads MEIILVGHAH…KIKEEFSTSL (125 aa). Histidine 8 serves as the catalytic Tele-phosphohistidine intermediate. Position 8 is a phosphohistidine; by HPr (histidine 8).

Its subcellular location is the cytoplasm. In terms of biological role, the phosphoenolpyruvate-dependent sugar phosphotransferase system (PTS), a major carbohydrate active transport system, catalyzes the phosphorylation of incoming sugar substrates concomitant with their translocation across the cell membrane. The enzyme II SorABCD PTS system is involved in L-sorbose transport. In Lacticaseibacillus casei (Lactobacillus casei), this protein is PTS system sorbose-specific EIIA component.